We begin with the raw amino-acid sequence, 519 residues long: Probable cytochrome P450 513D1 (519 aa).

A helical transmembrane segment spans residues 1-21; the sequence is MGISSIIIILFIIVLLKKLIK. C464 serves as a coordination point for heme.

The protein belongs to the cytochrome P450 family. Requires heme as cofactor.

The protein resides in the membrane. This Dictyostelium discoideum (Social amoeba) protein is Probable cytochrome P450 513D1 (cyp513D1).